Reading from the N-terminus, the 167-residue chain is UPF0587 protein F46B6.12 (167 aa).

4 residues coordinate Zn(2+): Cys-34, Cys-37, Cys-68, and Cys-71.

It belongs to the UPF0587 family.

This is UPF0587 protein F46B6.12 from Caenorhabditis elegans.